We begin with the raw amino-acid sequence, 155 residues long: Small ribosomal subunit protein uS7c (155 aa).

The protein belongs to the universal ribosomal protein uS7 family. As to quaternary structure, part of the 30S ribosomal subunit.

Its subcellular location is the plastid. It localises to the chloroplast. Its function is as follows. One of the primary rRNA binding proteins, it binds directly to 16S rRNA where it nucleates assembly of the head domain of the 30S subunit. This is Small ribosomal subunit protein uS7c (rps7) from Stewartia pseudocamellia (Japanese stewartia).